The primary structure comprises 324 residues: Olfactory receptor 5T17 (324 aa).

The Extracellular segment spans residues 1-37 (MPRTPSYTNTKTTQVNNVTEITVFILLGFTDDVDMNI). N-linked (GlcNAc...) asparagine glycosylation occurs at N17. A helical membrane pass occupies residues 38-58 (FLFILFLAIYVVTLIGNLGLV). At 59–66 (VLVIEDSR) the chain is on the cytoplasmic side. The chain crosses the membrane as a helical span at residues 67–87 (LHNPMYYFLTVLSSLDACFSS). The Extracellular portion of the chain corresponds to 88–111 (VLTPKMLVNFLSKNKSISFAGCAT). N101 carries N-linked (GlcNAc...) asparagine glycosylation. Residues C109 and C201 are joined by a disulfide bond. A helical membrane pass occupies residues 112-132 (QMLLFVTFGTTECFLLAAMAY). The Cytoplasmic portion of the chain corresponds to 133–145 (DRYLAIYSPLLYA). Residues 146–166 (VRMSPRVYVPLIIASYTGGIL) traverse the membrane as a helical segment. Topologically, residues 167 to 208 (HATIHTVATFSLSFCGSNEIRHVFCDIPPLLALSCSDTHLNQ) are extracellular. Residues 209–229 (LLLFYCAGSIELITILIVLVS) traverse the membrane as a helical segment. At 230 to 249 (YGFVLLAILKINSAEGRRKI) the chain is on the cytoplasmic side. Residues 250–270 (FSTCGAHLTGVSIFHGTILFM) traverse the membrane as a helical segment. Residues 271 to 283 (YVRPSSNYTLEQD) are Extracellular-facing. A glycan (N-linked (GlcNAc...) asparagine) is linked at N277. The helical transmembrane segment at 284-304 (MVVSTFYTIVIPMLNPIIYSL) threads the bilayer. The Cytoplasmic portion of the chain corresponds to 305–324 (RNKDVKEAMRKLLKRKLVHE).

It belongs to the G-protein coupled receptor 1 family.

It is found in the cell membrane. Functionally, potential odorant receptor. The chain is Olfactory receptor 5T17 from Mus musculus (Mouse).